The following is a 519-amino-acid chain: Sterile alpha motif domain-containing protein 1 (519 aa).

The segment covering 1-11 (MAGPPALPPPE) has biased composition (pro residues). Disordered regions lie at residues 1–30 (MAGPPALPPPETAAAATTAAAASSSAASPH) and 87–232 (YKGS…PVSL). Over residues 12-29 (TAAAATTAAAASSSAASP) the composition is skewed to low complexity. One can recognise an SAMD1-like winged helix (WH) domain in the interval 23 to 99 (SSSAASPHYQ…SISYRNAARV (77 aa)). Position 107 is a phosphothreonine (threonine 107). Residues 108 to 133 (PPAPPRVPRGGPAAPPPTPAPPPAPV) are compositionally biased toward pro residues. A compositionally biased stretch (low complexity) spans 134–147 (AAPTRAPRAAAATA). The residue at position 150 (serine 150) is a Phosphoserine. Residues 157-166 (GPRAQRAAPL) are compositionally biased toward low complexity. Residues 167–217 (AAPPPAPAAPPAAAPPAGPRRAPPPAVAAREPPAPPQQQQPPPPQPQPPPE) are compositionally biased toward pro residues. Residues 218-230 (GGAARAGGPARPV) show a composition bias toward low complexity. Residue serine 242 is modified to Phosphoserine. A compositionally biased stretch (basic and acidic residues) spans 261 to 271 (EAARGRLERTR). 2 disordered regions span residues 261–381 (EAAR…PGSC) and 417–439 (PALPGADGTPFGCPPGRKEKPTD). The span at 308–325 (KEEEDEDEDEEEEEEDNV) shows a compositional bias: acidic residues. Residues 443–511 (WTVMDVVEYF…KVLQQGHFED (69 aa)) form the SAM domain.

As to quaternary structure, homopolymerize into a closed pentameric ring. Interacts (via SAM domain) with L3MBTL3 (via SAM domain); the interaction mediates L3MBTL3 binding to chromatin. Interacts (via WH domain) with KDM1A; the interaction modulates KDM1A function. In terms of tissue distribution, expressed to similar levels in different organs. Expressed at higher levels in bone marrow, osteoclasts and spleen. Expressed in vascular smooth muscle cells.

The protein resides in the nucleus. It is found in the chromosome. Its subcellular location is the secreted. Its function is as follows. Unmethylated CpG islands (CGIs)-binding protein which localizes to H3K4me3-decorated CGIs, where it acts as a transcriptional repressor. Tethers L3MBTL3 to chromatin and interacts with the KDM1A histone demethylase complex to modulate H3K4me2 and H3K4me3 levels at CGIs. Plays a role in atherogenesis by binding with LDL on cell surface and promoting LDL oxidation which leads to the formation of foam cell. The chain is Sterile alpha motif domain-containing protein 1 from Mus musculus (Mouse).